A 459-amino-acid chain; its full sequence is Glutamate--tRNA ligase 1 (459 aa).

The 'HIGH' region motif lies at 8–18 (PSPTGYIHIGN). Residues 249-253 (GLSKR) carry the 'KMSKS' region motif. Lys252 serves as a coordination point for ATP.

The protein belongs to the class-I aminoacyl-tRNA synthetase family. Glutamate--tRNA ligase type 1 subfamily. Monomer.

The protein resides in the cytoplasm. The enzyme catalyses tRNA(Glu) + L-glutamate + ATP = L-glutamyl-tRNA(Glu) + AMP + diphosphate. Functionally, catalyzes the attachment of glutamate to tRNA(Glu) in a two-step reaction: glutamate is first activated by ATP to form Glu-AMP and then transferred to the acceptor end of tRNA(Glu). The sequence is that of Glutamate--tRNA ligase 1 from Bartonella quintana (strain Toulouse) (Rochalimaea quintana).